Reading from the N-terminus, the 950-residue chain is Synaptotagmin-like protein 2 (950 aa).

Positions 1–57 constitute a RabBD domain; that stretch reads MIDLSFLTEEEQDAILKVLQRDAALKRAEEERVRHLPEKIKDDQQLKNMSGQWFYEA. Disordered regions lie at residues 78–98, 116–289, and 361–620; these read RKKL…AKES, VEEP…ETLR, and ESDQ…SSSG. Residues 87-97 show a composition bias toward basic and acidic residues; that stretch reads QNKDTAMRAKE. Polar residues-rich tracts occupy residues 140-150 and 173-183; these read IDMSQESTRTP and LQQTKPEQSKT. Over residues 193 to 205 the composition is skewed to basic and acidic residues; the sequence is KEGELSESKEKSS. The span at 219 to 230 shows a compositional bias: polar residues; sequence QTVSTEPENASH. The segment covering 246–264 has biased composition (basic and acidic residues); that stretch reads NDLEKDDNQSFPRQRRDSL. Residues 434-445 show a composition bias toward polar residues; it reads VESSSVINGQQE. 2 stretches are compositionally biased toward basic and acidic residues: residues 479-502 and 531-544; these read HSFR…LERR and ELVR…KADQ. The span at 557–567 shows a compositional bias: polar residues; the sequence is TVPSLPDNQFS. A compositionally biased stretch (low complexity) spans 608-620; sequence SPSSLTNLSSSSG. 2 consecutive C2 domains span residues 644-769 and 784-913; these read VKGS…LKWY and NRGE…VDWM.

Monomer. Binds NRXN1. Binds RAB27A that has been activated by GTP-binding. Interacts with RAB27B. Isoform 1 is highly susceptible to proteolytic degradation and is stabilized by the interaction with RAB27A. As to expression, highly expressed in brain, lung, kidney, testis and in embryos after day 7. Detected at lower levels in skeletal muscle. Expressed in pancreatic alpha cells. Isoform 6 is highly expressed in brain, but not detectable in the other tissues tested. Isoform 1 is expressed abundantly in the stomach and is predominantly localized at the apical region of gastric-surface mucus cells. Isoform 11 is expressed in cytotoxic T-lymphocytes (CTL).

The protein resides in the melanosome membrane. It localises to the cell membrane. In terms of biological role, isoform 11 acts as a RAB27A effector protein and plays a role in cytotoxic granule exocytosis in lymphocytes. Required for cytotoxic granule docking at the immunologic synapse. Isoform 1 may play a role in melanosome transport and vesicle trafficking. It controls melanosome distribution in the cell periphery and regulates melanocyte morphology. Isoform 1 acts as a positive mediator of mucus secretion by the surface mucus cells of the stomach. Mediates basal mucus secretion by gastric surface cells by promoting the proper granule biognesis and docking of mucus granules with the apical plasma membrane. In Mus musculus (Mouse), this protein is Synaptotagmin-like protein 2 (Sytl2).